The following is an 868-amino-acid chain: DNA mismatch repair protein MutS (868 aa).

Residue Gly620 to Ser627 coordinates ATP.

Belongs to the DNA mismatch repair MutS family.

In terms of biological role, this protein is involved in the repair of mismatches in DNA. It is possible that it carries out the mismatch recognition step. This protein has a weak ATPase activity. This Xylella fastidiosa (strain 9a5c) protein is DNA mismatch repair protein MutS.